A 495-amino-acid polypeptide reads, in one-letter code: 3-octaprenyl-4-hydroxybenzoate carboxy-lyase (495 aa).

Asn172 is a binding site for Mn(2+). Prenylated FMN is bound by residues 175–177 (IYR), 189–191 (RWL), and 194–195 (RG). Glu238 contributes to the Mn(2+) binding site. The active-site Proton donor is Asp287.

Belongs to the UbiD family. In terms of assembly, homohexamer. Prenylated FMN serves as cofactor. Requires Mn(2+) as cofactor.

It localises to the cell membrane. The catalysed reaction is a 4-hydroxy-3-(all-trans-polyprenyl)benzoate + H(+) = a 2-(all-trans-polyprenyl)phenol + CO2. It participates in cofactor biosynthesis; ubiquinone biosynthesis. Catalyzes the decarboxylation of 3-octaprenyl-4-hydroxy benzoate to 2-octaprenylphenol, an intermediate step in ubiquinone biosynthesis. The protein is 3-octaprenyl-4-hydroxybenzoate carboxy-lyase of Yersinia pestis bv. Antiqua (strain Angola).